We begin with the raw amino-acid sequence, 353 residues long: GTPase Obg (353 aa).

Residues 1–159 form the Obg domain; it reads MKFLDEAKVY…RWIWLRLKLI (159 aa). Residues 160–327 form the OBG-type G domain; it reads ADAGLVGLPN…ALRALAAVIG (168 aa). GTP contacts are provided by residues 166-173, 191-195, 212-215, 279-282, and 308-310; these read GLPNAGKS, FTTLH, DIPG, NKID, and SGI. Mg(2+) contacts are provided by Ser173 and Thr193. Residues 332–353 are disordered; it reads SDKAKGAADNAANAEPWAPQDA.

This sequence belongs to the TRAFAC class OBG-HflX-like GTPase superfamily. OBG GTPase family. In terms of assembly, monomer. Mg(2+) is required as a cofactor.

It localises to the cytoplasm. Its function is as follows. An essential GTPase which binds GTP, GDP and possibly (p)ppGpp with moderate affinity, with high nucleotide exchange rates and a fairly low GTP hydrolysis rate. Plays a role in control of the cell cycle, stress response, ribosome biogenesis and in those bacteria that undergo differentiation, in morphogenesis control. The protein is GTPase Obg of Rhodopseudomonas palustris (strain HaA2).